Consider the following 689-residue polypeptide: Glycine--tRNA ligase beta subunit (689 aa).

Belongs to the class-II aminoacyl-tRNA synthetase family. As to quaternary structure, tetramer of two alpha and two beta subunits.

It localises to the cytoplasm. It catalyses the reaction tRNA(Gly) + glycine + ATP = glycyl-tRNA(Gly) + AMP + diphosphate. The polypeptide is Glycine--tRNA ligase beta subunit (Escherichia coli (strain K12 / MC4100 / BW2952)).